Reading from the N-terminus, the 211-residue chain is Uracil phosphoribosyltransferase (211 aa).

5-phospho-alpha-D-ribose 1-diphosphate-binding positions include R78, R103, and 130–138 (DPMLATGNS). Residues I193 and 198-200 (GDA) contribute to the uracil site. D199 serves as a coordination point for 5-phospho-alpha-D-ribose 1-diphosphate.

Belongs to the UPRTase family. Requires Mg(2+) as cofactor.

It catalyses the reaction UMP + diphosphate = 5-phospho-alpha-D-ribose 1-diphosphate + uracil. Its pathway is pyrimidine metabolism; UMP biosynthesis via salvage pathway; UMP from uracil: step 1/1. Allosterically activated by GTP. Functionally, catalyzes the conversion of uracil and 5-phospho-alpha-D-ribose 1-diphosphate (PRPP) to UMP and diphosphate. This Acinetobacter baumannii (strain ATCC 17978 / DSM 105126 / CIP 53.77 / LMG 1025 / NCDC KC755 / 5377) protein is Uracil phosphoribosyltransferase.